Reading from the N-terminus, the 64-residue chain is Large ribosomal subunit protein uL29 (64 aa).

It belongs to the universal ribosomal protein uL29 family.

This is Large ribosomal subunit protein uL29 from Chloroherpeton thalassium (strain ATCC 35110 / GB-78).